Here is a 269-residue protein sequence, read N- to C-terminus: Xyloglucan endotransglucosylase/hydrolase protein 24 (269 aa).

The N-terminal stretch at methionine 1 to alanine 21 is a signal peptide. One can recognise a GH16 domain in the interval alanine 22–tyrosine 212. The active-site Nucleophile is the glutamate 98. Glutamate 102 (proton donor) is an active-site residue. Position 102 (glutamate 102) interacts with xyloglucan. N-linked (GlcNAc...) asparagine glycosylation is present at asparagine 106. Residues histidine 115–asparagine 117, aspartate 125–glutamate 127, aspartate 191–tryptophan 192, glycine 196, and arginine 256 each bind xyloglucan. Cysteine 251 and cysteine 265 are disulfide-bonded.

The protein belongs to the glycosyl hydrolase 16 family. XTH group 2 subfamily. Contains at least one intrachain disulfide bond essential for its enzymatic activity. Post-translationally, N-glycosylated; essential for its enzymatic activity. In terms of tissue distribution, highly expressed. Predominantly expressed in stems. Expressed in shoot apical meristems, also found in seedlings and meristems.

Its subcellular location is the secreted. The protein resides in the cell wall. It is found in the extracellular space. The protein localises to the apoplast. The catalysed reaction is breaks a beta-(1-&gt;4) bond in the backbone of a xyloglucan and transfers the xyloglucanyl segment on to O-4 of the non-reducing terminal glucose residue of an acceptor, which can be a xyloglucan or an oligosaccharide of xyloglucan.. Its function is as follows. Catalyzes xyloglucan endohydrolysis (XEH) and/or endotransglycosylation (XET). Cleaves and religates xyloglucan polymers, an essential constituent of the primary cell wall, and thereby participates in cell wall construction of growing tissues. May be required during development to modify the walls of cells under mechanical stress. The sequence is that of Xyloglucan endotransglucosylase/hydrolase protein 24 (XTH24) from Arabidopsis thaliana (Mouse-ear cress).